A 421-amino-acid polypeptide reads, in one-letter code: Cell division protein FtsA (421 aa).

It belongs to the FtsA/MreB family. As to quaternary structure, self-interacts. Interacts with FtsZ.

The protein localises to the cell membrane. Its function is as follows. Cell division protein that is involved in the assembly of the Z ring. May serve as a membrane anchor for the Z ring. This chain is Cell division protein FtsA, found in Buchnera aphidicola subsp. Baizongia pistaciae (strain Bp).